A 645-amino-acid chain; its full sequence is Transcription termination factor FttA (645 aa).

A KHa region spans residues 10–77; it reads APSNQNIMAT…IIVRIDESVR (68 aa). The tract at residues 78–146 is KHb; sequence KKEEDARKML…WTLRIRKATT (69 aa). Residues 187 to 391 are metallo-beta-lactamase N-terminus; it reads EISLTALGGF…LLIESTYGAK (205 aa). Residues H250, H252, D254, H255, H337, and D360 each contribute to the Zn(2+) site. Positions 392 to 586 are beta-Casp; sequence EDIQPTRQEV…CRMEKLDGFS (195 aa). The segment at 587 to 645 is metallo-beta-lactamase C-terminus; the sequence is GHSDYNQLTGFVQKLRPKLRRVLVNHGERRKSENLALAVRRMFRIPAHYPQIQESIKLF. Position 612 (H612) interacts with Zn(2+).

This sequence belongs to the metallo-beta-lactamase superfamily. RNA-metabolizing metallo-beta-lactamase-like family. FttA subfamily. Homodimer. Interacts with RNA polymerase (RNAP), interacts with the Spt4-Spt5 complex. Requires Zn(2+) as cofactor.

In terms of biological role, terminates transcription on the whole genome. Termination is linked to FttA-mediated RNA cleavage and does not require NTP hydrolysis. Cleaves endonucleolytically at the RNA exit channel of RNA polymerase (RNAP); the 5'-3' exonuclease activity of this protein degrades the nascent RNA released from RNAP. Its function is as follows. Terminates transcription genome-wide in M.maripaludis. Restores wild-type growth to a strain of Methanococcus maripaludis depleted for this gene at 22 degrees Celsius and prevents transcriptional read-through. Transcription termination is most effective in vivo on RNAs with more than one U4-tract in their 3'-ends. Has endonuclease activity after U-rich tracts in transcription termination sequences. The polypeptide is Transcription termination factor FttA (Cenarchaeum symbiosum (strain A)).